A 149-amino-acid polypeptide reads, in one-letter code: Large ribosomal subunit protein bL9 (149 aa).

The protein belongs to the bacterial ribosomal protein bL9 family.

Functionally, binds to the 23S rRNA. In Helicobacter acinonychis (strain Sheeba), this protein is Large ribosomal subunit protein bL9.